The primary structure comprises 313 residues: Aspartate carbamoyltransferase catalytic subunit (313 aa).

Carbamoyl phosphate-binding residues include Arg59 and Thr60. Lys87 contacts L-aspartate. Residues Arg109, His137, and Gln140 each coordinate carbamoyl phosphate. Positions 170 and 224 each coordinate L-aspartate. The carbamoyl phosphate site is built by Gly265 and Pro266.

This sequence belongs to the aspartate/ornithine carbamoyltransferase superfamily. ATCase family. As to quaternary structure, heterododecamer (2C3:3R2) of six catalytic PyrB chains organized as two trimers (C3), and six regulatory PyrI chains organized as three dimers (R2).

The enzyme catalyses carbamoyl phosphate + L-aspartate = N-carbamoyl-L-aspartate + phosphate + H(+). The protein operates within pyrimidine metabolism; UMP biosynthesis via de novo pathway; (S)-dihydroorotate from bicarbonate: step 2/3. Its function is as follows. Catalyzes the condensation of carbamoyl phosphate and aspartate to form carbamoyl aspartate and inorganic phosphate, the committed step in the de novo pyrimidine nucleotide biosynthesis pathway. The polypeptide is Aspartate carbamoyltransferase catalytic subunit (Rhizobium meliloti (strain 1021) (Ensifer meliloti)).